Consider the following 297-residue polypeptide: Protoheme IX farnesyltransferase (297 aa).

The next 8 helical transmembrane spans lie at 15-35 (VVALILFTAVVGMFLAVPAPY), 39-59 (GLLVLSASIGISMVAASAAVF), 91-111 (VWGVFLGFIGLGILQLFVNII), 112-132 (TVVLTFISLIGYTIVYTLYLK), 139-159 (IVIGGAAGATPPVLGWTAVSG), 166-186 (ACLLFLIVFIWTPPHFWALAI), 220-240 (LLLVSLLPYLSGMSGLIYLVI), and 265-285 (AWSTFMYSINYLMLLFIALLF).

The protein belongs to the UbiA prenyltransferase family. Protoheme IX farnesyltransferase subfamily.

The protein resides in the cell inner membrane. The enzyme catalyses heme b + (2E,6E)-farnesyl diphosphate + H2O = Fe(II)-heme o + diphosphate. Its pathway is porphyrin-containing compound metabolism; heme O biosynthesis; heme O from protoheme: step 1/1. Its function is as follows. Converts heme B (protoheme IX) to heme O by substitution of the vinyl group on carbon 2 of heme B porphyrin ring with a hydroxyethyl farnesyl side group. The polypeptide is Protoheme IX farnesyltransferase (Vesicomyosocius okutanii subsp. Calyptogena okutanii (strain HA)).